The chain runs to 154 residues: Transcriptional repressor NrdR (154 aa).

A zinc finger spans residues 3-34; it reads CPFCRHPDSRVVDSRETDEGQAIRRRRSCPEC. In terms of domain architecture, ATP-cone spans 46-136; it reads LAVVKRSGVT…VYRSFESAAD (91 aa).

This sequence belongs to the NrdR family. Zn(2+) is required as a cofactor.

Its function is as follows. Negatively regulates transcription of bacterial ribonucleotide reductase nrd genes and operons by binding to NrdR-boxes. The polypeptide is Transcriptional repressor NrdR (Mycobacterium sp. (strain JLS)).